The chain runs to 638 residues: Phosphomethylpyrimidine synthase (638 aa).

Substrate is bound by residues asparagine 243, methionine 272, tyrosine 301, histidine 337, serine 357 to glycine 359, aspartate 398 to arginine 401, and glutamate 437. Zn(2+) is bound at residue histidine 441. Tyrosine 464 serves as a coordination point for substrate. Histidine 505 is a binding site for Zn(2+). [4Fe-4S] cluster-binding residues include cysteine 585, cysteine 588, and cysteine 593.

Belongs to the ThiC family. As to quaternary structure, homodimer. Requires [4Fe-4S] cluster as cofactor.

The catalysed reaction is 5-amino-1-(5-phospho-beta-D-ribosyl)imidazole + S-adenosyl-L-methionine = 4-amino-2-methyl-5-(phosphooxymethyl)pyrimidine + CO + 5'-deoxyadenosine + formate + L-methionine + 3 H(+). The protein operates within cofactor biosynthesis; thiamine diphosphate biosynthesis. Functionally, catalyzes the synthesis of the hydroxymethylpyrimidine phosphate (HMP-P) moiety of thiamine from aminoimidazole ribotide (AIR) in a radical S-adenosyl-L-methionine (SAM)-dependent reaction. The polypeptide is Phosphomethylpyrimidine synthase (Aromatoleum aromaticum (strain DSM 19018 / LMG 30748 / EbN1) (Azoarcus sp. (strain EbN1))).